The primary structure comprises 914 residues: Protein translocase subunit SecA (914 aa).

Residues glutamine 87, glycine 105–threonine 109, and aspartate 508 contribute to the ATP site. Zn(2+) contacts are provided by cysteine 898, cysteine 900, cysteine 909, and histidine 910.

Belongs to the SecA family. Monomer and homodimer. Part of the essential Sec protein translocation apparatus which comprises SecA, SecYEG and auxiliary proteins SecDF-YajC and YidC. Zn(2+) is required as a cofactor.

It localises to the cell inner membrane. The protein resides in the cytoplasm. The catalysed reaction is ATP + H2O + cellular proteinSide 1 = ADP + phosphate + cellular proteinSide 2.. Part of the Sec protein translocase complex. Interacts with the SecYEG preprotein conducting channel. Has a central role in coupling the hydrolysis of ATP to the transfer of proteins into and across the cell membrane, serving both as a receptor for the preprotein-SecB complex and as an ATP-driven molecular motor driving the stepwise translocation of polypeptide chains across the membrane. This Xylella fastidiosa (strain M12) protein is Protein translocase subunit SecA.